A 290-amino-acid chain; its full sequence is 4-hydroxybenzoate octaprenyltransferase (290 aa).

6 helical membrane-spanning segments follow: residues 41–61 (WPLVAIFALGTLLMRSAGCAM), 89–109 (WEAVAIAAVLSFVAFLLILPL), 133–153 (FFAIPQAYLGIAFGFGIPMAF), 158–178 (GTVPALAWVMLVANVFWSVAY), 202–224 (FGRFDVAAIMLCYAVTLGIYAWI), and 269–289 (WLGGVLFAGIAAHYLVAGAAG).

It belongs to the UbiA prenyltransferase family. Mg(2+) serves as cofactor.

The protein resides in the cell inner membrane. It catalyses the reaction all-trans-octaprenyl diphosphate + 4-hydroxybenzoate = 4-hydroxy-3-(all-trans-octaprenyl)benzoate + diphosphate. It participates in cofactor biosynthesis; ubiquinone biosynthesis. Catalyzes the prenylation of para-hydroxybenzoate (PHB) with an all-trans polyprenyl group. Mediates the second step in the final reaction sequence of ubiquinone-8 (UQ-8) biosynthesis, which is the condensation of the polyisoprenoid side chain with PHB, generating the first membrane-bound Q intermediate 3-octaprenyl-4-hydroxybenzoate. This is 4-hydroxybenzoate octaprenyltransferase from Burkholderia vietnamiensis (strain G4 / LMG 22486) (Burkholderia cepacia (strain R1808)).